The sequence spans 575 residues: MLSARCLKSIYFKRSFSQLGHIKPPKHIRNEPVKPFRNIDLKDWDLLRASLMKFKSSSLEVPLVINGERIYDNNERALFPQTNPANHQQVLANVTQATEKDVMNAVKAAKDAKKDWYNLPFYDRSAIFLKAADLISTKYRYDMLAATMLGQGKNVYQAEIDCITELSDFFRYYVKYASDLYAQQPVESADGTWNKAEYRPLEGFVYAVSPFNFTAIAANLIGAPALMGNTVVWKPSQTAALSNYLLMTVLEEAGLPKGVINFIPGDPVQVTDQVLADKDFGALHFTGSTNVFKSLYGKIQSGVVEGKYRDYPRIIGETGGKNFHLVHPSANISHAVLSTIRGTFEFQGQKCSAASRLYLPESKSEEFLSDMFGILQSQNVVPMNTSASPISGGNLRGFMGPVIHEQSFDKLVKVIEDAKKDPELEILYGGQYDKSQGWFVGPTVIKAKRPDHPYMSTEFFGPILTVYEYPDTEFNEICDIIDNTSQYALTGAIFAKDRKAIEYADEKLKFSAGNFYINDKCTGAVVSQQWFGGARMSGTDDKAGGPNILSRFVSIRNTKENFYELTDFKYPSNYE.

Gly297–Gly302 is a binding site for NAD(+). Glu317 functions as the Proton acceptor in the catalytic mechanism. Cys351 acts as the Nucleophile in catalysis.

This sequence belongs to the aldehyde dehydrogenase family.

It localises to the mitochondrion inner membrane. The enzyme catalyses L-glutamate 5-semialdehyde + NAD(+) + H2O = L-glutamate + NADH + 2 H(+). The protein operates within amino-acid degradation; L-proline degradation into L-glutamate; L-glutamate from L-proline: step 2/2. The protein is Delta-1-pyrroline-5-carboxylate dehydrogenase, mitochondrial (PUT2) of Saccharomyces cerevisiae (strain ATCC 204508 / S288c) (Baker's yeast).